The sequence spans 1159 residues: Anillin-like protein 1 (1159 aa).

Disordered stretches follow at residues 43-81 (VASP…MKEN), 266-327 (QQVS…TKTT), 409-430 (KLKK…APVP), 549-608 (AIPK…GDVI), and 629-699 (FGFM…KSSS). A compositionally biased stretch (polar residues) spans 50-60 (FGSSSKCNDGP). The segment covering 287 to 327 (ASSATSSSSSTTTLTTISGASGSTTSGISNAPQDSASTKTT) has biased composition (low complexity). The span at 421-430 (PPAPTSAPVP) shows a compositional bias: pro residues. Polar residues predominate over residues 564 to 584 (SASSLYSQGARSNTASPASKS). The span at 660 to 684 (VIEEETENEDESEPYEPEEEEDDDA) shows a compositional bias: acidic residues. The region spanning 1029–1147 (DITYHGFLSM…WLSLINSTSK (119 aa)) is the PH domain.

Strongly expressed in dividing neuroblasts under the ventral epidermal cells during ventral enclosure.

The protein localises to the cytoplasm. It is found in the cell cortex. Its subcellular location is the cytoskeleton. It localises to the spindle. The protein resides in the midbody. The protein localises to the cleavage furrow. Its function is as follows. Required for contractile events in embryos that occur prior to mitosis, such as cortical ruffling and pseudocleavage. Promotes membrane ruffling by organizing cortical patches of septins and myosin II. Not generally required for cytokinesis in mitotic cells. Required for the asymmetric cleavage events that extrude the two polar bodies during oocyte meiosis. Not required for meiotic contractile ring assembly, initiation or closure but is required for the transformation of the contractile ring from a disk above the spindle to a tube around the spindle midzone. Promotes astral microtubule-directed cortical myosin polarization and cleavage furrow ingression. Regulates neuroblast cytokinesis during mid- to late-embryogenesis and is required for ventral enclosure. In Caenorhabditis elegans, this protein is Anillin-like protein 1 (ani-1).